Here is a 208-residue protein sequence, read N- to C-terminus: Ribosomal RNA small subunit methyltransferase G (208 aa).

S-adenosyl-L-methionine is bound by residues G78, F83, 101–103, 129–130, and R142; these read ERS and IE.

The protein belongs to the methyltransferase superfamily. RNA methyltransferase RsmG family.

The protein resides in the cytoplasm. In terms of biological role, specifically methylates the N7 position of a guanine in 16S rRNA. The polypeptide is Ribosomal RNA small subunit methyltransferase G (Borrelia garinii subsp. bavariensis (strain ATCC BAA-2496 / DSM 23469 / PBi) (Borreliella bavariensis)).